The sequence spans 143 residues: Transcriptional regulator SlyA (143 aa).

The region spanning 2–135 (ESTLGSDLAR…LSGLIDKLEK (134 aa)) is the HTH marR-type domain. The H-T-H motif DNA-binding region spans 49 to 72 (QIQLAKAIGIEQPSLVRTLDQLEE).

Belongs to the SlyA family. In terms of assembly, homodimer.

Transcription regulator that can specifically activate or repress expression of target genes. The protein is Transcriptional regulator SlyA of Yersinia pestis (strain Pestoides F).